Consider the following 158-residue polypeptide: ATP synthase subunit b', chloroplastic (158 aa).

A helical transmembrane segment spans residues 25 to 45 (ATLPLMALQFIILTTILNFIF).

Belongs to the ATPase B chain family. As to quaternary structure, F-type ATPases have 2 components, F(1) - the catalytic core - and F(0) - the membrane proton channel. F(1) has five subunits: alpha(3), beta(3), gamma(1), delta(1), epsilon(1). F(0) has four main subunits: a(1), b(1), b'(1) and c(10-14). The alpha and beta chains form an alternating ring which encloses part of the gamma chain. F(1) is attached to F(0) by a central stalk formed by the gamma and epsilon chains, while a peripheral stalk is formed by the delta, b and b' chains.

Its subcellular location is the plastid. It is found in the chloroplast thylakoid membrane. In terms of biological role, f(1)F(0) ATP synthase produces ATP from ADP in the presence of a proton or sodium gradient. F-type ATPases consist of two structural domains, F(1) containing the extramembraneous catalytic core and F(0) containing the membrane proton channel, linked together by a central stalk and a peripheral stalk. During catalysis, ATP synthesis in the catalytic domain of F(1) is coupled via a rotary mechanism of the central stalk subunits to proton translocation. Functionally, component of the F(0) channel, it forms part of the peripheral stalk, linking F(1) to F(0). The b'-subunit is a diverged and duplicated form of b found in plants and photosynthetic bacteria. This is ATP synthase subunit b', chloroplastic from Gracilaria tenuistipitata var. liui (Red alga).